A 127-amino-acid chain; its full sequence is Protein HI_1253 (127 aa).

Helical transmembrane passes span 13-33 (VIML…LLVI), 61-81 (LIVS…WWLV), 82-102 (AKFA…SKKV), and 107-127 (SIFF…AYLK).

It belongs to the SirB2 family.

Its subcellular location is the cell inner membrane. The chain is Protein HI_1253 from Haemophilus influenzae (strain ATCC 51907 / DSM 11121 / KW20 / Rd).